Reading from the N-terminus, the 219-residue chain is Ras-related protein Rab-3D (219 aa).

Residue alanine 2 is modified to N-acetylalanine. 29–37 (GNSSVGKTS) contributes to the GDP binding site. Serine 31, serine 32, valine 33, glycine 34, lysine 35, threonine 36, serine 37, proline 49, and serine 53 together coordinate GTP. Threonine 36 serves as a coordination point for Mg(2+). The Switch 1 signature appears at 49 to 58 (PAFVSTVGID). Residues threonine 54 and aspartate 77 each coordinate Mg(2+). Residue glycine 80 participates in GTP binding. A Switch 2 motif is present at residues 80–96 (GQERYRTITTAYYRGAM). Threonine 86 is subject to Phosphothreonine; by LRRK2. Positions 135, 136, 138, 166, and 167 each coordinate GTP. Residues 135–138 (NKCD) and 165–167 (SAK) each bind GDP. Serine 190 is subject to Phosphoserine. Positions 190–199 (SLEPSSSSGS) are enriched in low complexity. Positions 190–219 (SLEPSSSSGSNGKGPAVGDAPAPQPSSCSC) are disordered. S-geranylgeranyl cysteine attachment occurs at residues cysteine 217 and cysteine 219. Cysteine 219 is modified (cysteine methyl ester).

Belongs to the small GTPase superfamily. Rab family. As to quaternary structure, interacts with RIMS1, RIMS2, RPH3A, RPH3AL and RAB3IP. The GTP-bound form interacts with REP15. Interacts with CHM and CHML; phosphorylation at Thr-86 disrupts these interactions. Interacts with MADD (via uDENN domain); the GTP-bound form is preferred for interaction. Mg(2+) serves as cofactor. Post-translationally, phosphorylation of Thr-86 in the switch II region by LRRK2 prevents the association of RAB regulatory proteins, including CHM and CHML. Highly expressed in granulocytes of peripheral blood. Constitutively expressed at low levels in all hematopoietic cell lines investigated.

The protein localises to the cell membrane. It catalyses the reaction GTP + H2O = GDP + phosphate + H(+). Regulated by guanine nucleotide exchange factors (GEFs) which promote the exchange of bound GDP for free GTP. Regulated by GTPase activating proteins (GAPs) which increase the GTP hydrolysis activity. Inhibited by GDP dissociation inhibitors (GDIs) which prevent Rab-GDP dissociation. Its function is as follows. The small GTPases Rab are key regulators of intracellular membrane trafficking, from the formation of transport vesicles to their fusion with membranes. Rabs cycle between an inactive GDP-bound form and an active GTP-bound form that is able to recruit to membranes different sets of downstream effectors directly responsible for vesicle formation, movement, tethering and fusion. RAB3D may be involved in the insulin-induced exocytosis of GLUT4-containing vesicles in adipocytes. The polypeptide is Ras-related protein Rab-3D (Homo sapiens (Human)).